The primary structure comprises 708 residues: Prolyl 3-hydroxylase 2 (708 aa).

Residues 1–24 form the signal peptide; it reads MRERIWAPPLLLLLPLLLPPPLWG. 4 TPR repeats span residues 44–77, 148–181, 210–243, and 306–339; these read FDLLYASGAAAYYSGDYERAVRDLEAALRSHRRL, RVPYNYLQRAYIKLNQLEKAVEAAHTFFVANPEH, HMESYNAGVKHYEADDFEMAIRHFEQALREYFVE, and PLHYDYLQFAYYRVGEYVKALECAKAYLLCHPDD. N-linked (GlcNAc...) asparagine glycosylation is found at Asn449 and Asn549. Positions 557–671 constitute a Fe2OG dioxygenase domain; sequence THMVCRTALS…RCAVALWFTL (115 aa). Residues His580, Asp582, and His652 each contribute to the Fe cation site. Arg662 is an active-site residue. The Prevents secretion from ER motif lies at 705–708; it reads KDEL.

The protein belongs to the leprecan family. Fe cation is required as a cofactor. The cofactor is L-ascorbate. As to expression, expression localized to the epithelia of bile ducts and to the sacroplasm of heart muscle and skeletal muscle. In the pancreas, localized to a subpopulation of Langerhans islet cells and in the salivary gland, expressed in acinar cells (at protein level). Expressed in adult heart, placenta, lung, liver, skeletal muscle and kidney. Detected in fetal heart, spleen, lung, liver skeletal muscle and kidney.

It localises to the endoplasmic reticulum. It is found in the sarcoplasmic reticulum. The protein localises to the golgi apparatus. The enzyme catalyses L-prolyl-[collagen] + 2-oxoglutarate + O2 = trans-3-hydroxy-L-prolyl-[collagen] + succinate + CO2. With respect to regulation, inhibited by pyridine 2,4-dicarboxylate, an analog of 2-oxoglutarate. In terms of biological role, prolyl 3-hydroxylase that catalyzes the post-translational formation of 3-hydroxyproline on collagens. Contributes to proline 3-hydroxylation of collagen COL4A1 and COL1A1 in tendons, the eye sclera and in the eye lens capsule. Has high activity with the type IV collagen COL4A1, and lower activity with COL1A1. Catalyzes hydroxylation of the first Pro in Gly-Pro-Hyp sequences where Hyp is 4-hydroxyproline. Has no activity on substrates that lack 4-hydroxyproline in the third position. This chain is Prolyl 3-hydroxylase 2, found in Homo sapiens (Human).